The primary structure comprises 183 residues: Thioredoxin-like protein CITRX, chloroplastic (183 aa).

The transit peptide at 1 to 81 (MALVQSRTFP…REDYLVKKLS (81 aa)) directs the protein to the chloroplast. Positions 82–183 (AQELQELVKG…MMHDIIDNEM (102 aa)) constitute a Thioredoxin domain. Catalysis depends on nucleophile residues cysteine 106 and cysteine 109. Cysteine 106 and cysteine 109 are disulfide-bonded.

It belongs to the thioredoxin family. Plant CITRX-type subfamily. Interacts with FLN1 and FLN2. Interacts with MRL7.

The protein resides in the plastid. Its subcellular location is the chloroplast. In terms of biological role, thiol-disulfide oxidoreductase that plays a role in proper chloroplast development, most likely through regulating plastid-encoded polymerase (PEP) dependent chloroplast transcription. Acts as a component of the transcriptionally active plastid chromosome that is required for plastid gene expression. The chain is Thioredoxin-like protein CITRX, chloroplastic from Arabidopsis thaliana (Mouse-ear cress).